The primary structure comprises 120 residues: UPF0342 protein LAF_1331 (120 aa).

It belongs to the UPF0342 family.

The chain is UPF0342 protein LAF_1331 from Limosilactobacillus fermentum (strain NBRC 3956 / LMG 18251) (Lactobacillus fermentum).